A 541-amino-acid chain; its full sequence is Kinesin light chain 1 (541 aa).

A coiled-coil region spans residues 27-156 (KTKQVIQGLE…HLEFMNQLKK (130 aa)). The segment covering 156-176 (KYDDDISPSEDKDSDSSKEPL) has biased composition (basic and acidic residues). A disordered region spans residues 156–201 (KYDDDISPSEDKDSDSSKEPLDDLFPNDEDEPGQGIQHSDSSAAAA). Serine 162 is modified (phosphoserine). TPR repeat units lie at residues 211–244 (LRTLHNLVIQYASQGRYEVAVPSCKQALEDLEKT), 253–286 (ATMLNILALVYRDQNKYKDAANLLNDALAIREKT), 295–328 (AATLNNLAVLYGKRGKYKEAEPLCKRALEIREKV), 337–370 (AKQLNNLALLCQNQGKYEEVEYYYQRALGIYQTK), and 380–413 (AKTKNNLASCYLKQGKFKQAETLYKEILTRAHEA). The residue at position 448 (tyrosine 448) is a Phosphotyrosine. Serine 459 is modified (phosphoserine). A TPR 6 repeat occupies 463–496 (TTTLKNLGALYRRQGKFEAAETLEEAAMRSRKQG). A disordered region spans residues 493–541 (RKQGLDNVHKQRVAEVLNDPESMEKRRSRESLNMDVVKYESGPDGGEEA). 2 stretches are compositionally biased toward basic and acidic residues: residues 495 to 505 (QGLDNVHKQRV) and 514 to 524 (SMEKRRSRESL). Phosphoserine; by AMPK is present on residues serine 520 and serine 523.

The protein belongs to the kinesin light chain family. Oligomeric complex composed of two heavy chains and two light chains. Interacts with SPAG9. Interacts with ATCAY; may link mitochondria to KLC1 and regulate mitochondria localization into neuron projections. Interacts (via TPR repeats) with TOR1A; the interaction associates TOR1A with the kinesin oligomeric complex. Interacts with BORCS5. Interacts with MAPK8IP3/JIP3 and NTRK2/TRKB; interaction with NTRK2/TRKB is mediated by MAPK8IP3/JIP3. Interacts with CLSTN1; phosphorylation at Ser-459 inhibits interaction with CLSTN1. Post-translationally, phosphorylation at Ser-459 by ERK inhibits interaction with CLSTN1 and localization to cytoplasmic vesicles.

The protein resides in the cell projection. Its subcellular location is the growth cone. The protein localises to the cytoplasmic vesicle. It localises to the cytoplasm. It is found in the cytoskeleton. Kinesin is a microtubule-associated force-producing protein that may play a role in organelle transport. The light chain may function in coupling of cargo to the heavy chain or in the modulation of its ATPase activity. This is Kinesin light chain 1 (Klc1) from Mus musculus (Mouse).